The chain runs to 599 residues: Elongation factor 4 (599 aa).

One can recognise a tr-type G domain in the interval serine 5–glutamate 187. GTP is bound by residues aspartate 17 to threonine 22 and asparagine 134 to aspartate 137.

The protein belongs to the TRAFAC class translation factor GTPase superfamily. Classic translation factor GTPase family. LepA subfamily.

The protein resides in the cell inner membrane. The catalysed reaction is GTP + H2O = GDP + phosphate + H(+). In terms of biological role, required for accurate and efficient protein synthesis under certain stress conditions. May act as a fidelity factor of the translation reaction, by catalyzing a one-codon backward translocation of tRNAs on improperly translocated ribosomes. Back-translocation proceeds from a post-translocation (POST) complex to a pre-translocation (PRE) complex, thus giving elongation factor G a second chance to translocate the tRNAs correctly. Binds to ribosomes in a GTP-dependent manner. The polypeptide is Elongation factor 4 (Pseudomonas putida (strain ATCC 47054 / DSM 6125 / CFBP 8728 / NCIMB 11950 / KT2440)).